We begin with the raw amino-acid sequence, 127 residues long: PRA1 family protein C (127 aa).

3 helical membrane-spanning segments follow: residues 15–35, 53–73, and 76–96; these read IFIS…LIVA, VIDD…IFLL, and VSRG…VHGM.

It belongs to the PRA1 family.

Its subcellular location is the endoplasmic reticulum membrane. May be involved in both secretory and endocytic intracellular trafficking in the endosomal/prevacuolar compartments. The chain is PRA1 family protein C (PRA1C) from Arabidopsis thaliana (Mouse-ear cress).